Consider the following 340-residue polypeptide: Heat-inducible transcription repressor HrcA (340 aa).

Belongs to the HrcA family.

Its function is as follows. Negative regulator of class I heat shock genes (grpE-dnaK-dnaJ and groELS operons). Prevents heat-shock induction of these operons. The polypeptide is Heat-inducible transcription repressor HrcA (Burkholderia cenocepacia (strain ATCC BAA-245 / DSM 16553 / LMG 16656 / NCTC 13227 / J2315 / CF5610) (Burkholderia cepacia (strain J2315))).